Consider the following 459-residue polypeptide: Ribulose bisphosphate carboxylase large chain (459 aa).

Lys-4 carries the post-translational modification N6,N6,N6-trimethyllysine. Substrate contacts are provided by Asn-113 and Thr-163. The Proton acceptor role is filled by Lys-165. Lys-167 is a binding site for substrate. Mg(2+) contacts are provided by Lys-191, Asp-193, and Glu-194. N6-carboxylysine is present on Lys-191. His-284 serves as the catalytic Proton acceptor. Substrate-binding residues include Arg-285, His-317, and Ser-369.

This sequence belongs to the RuBisCO large chain family. Type I subfamily. In terms of assembly, heterohexadecamer of 8 large chains and 8 small chains; disulfide-linked. The disulfide link is formed within the large subunit homodimers. It depends on Mg(2+) as a cofactor. In terms of processing, the disulfide bond which can form in the large chain dimeric partners within the hexadecamer appears to be associated with oxidative stress and protein turnover.

It localises to the plastid. The protein localises to the chloroplast. The catalysed reaction is 2 (2R)-3-phosphoglycerate + 2 H(+) = D-ribulose 1,5-bisphosphate + CO2 + H2O. It carries out the reaction D-ribulose 1,5-bisphosphate + O2 = 2-phosphoglycolate + (2R)-3-phosphoglycerate + 2 H(+). Its function is as follows. RuBisCO catalyzes two reactions: the carboxylation of D-ribulose 1,5-bisphosphate, the primary event in carbon dioxide fixation, as well as the oxidative fragmentation of the pentose substrate in the photorespiration process. Both reactions occur simultaneously and in competition at the same active site. In Parnassia fimbriata (Fringed grass-of-Parnassus), this protein is Ribulose bisphosphate carboxylase large chain.